Reading from the N-terminus, the 217-residue chain is Ribonuclease HII (217 aa).

The 190-residue stretch at 27–216 (SRIAGVDEAG…VKESIREGIC (190 aa)) folds into the RNase H type-2 domain. A divalent metal cation contacts are provided by D33, E34, and D126.

This sequence belongs to the RNase HII family. Requires Mn(2+) as cofactor. Mg(2+) serves as cofactor.

The protein localises to the cytoplasm. It catalyses the reaction Endonucleolytic cleavage to 5'-phosphomonoester.. In terms of biological role, endonuclease that specifically degrades the RNA of RNA-DNA hybrids. The protein is Ribonuclease HII (rnhB) of Chlamydia muridarum (strain MoPn / Nigg).